The chain runs to 287 residues: Protease HtpX (287 aa).

2 helical membrane passes run 4–24 and 33–53; these read IFLL…VMSI and GGLL…SLAI. H139 lines the Zn(2+) pocket. Residue E140 is part of the active site. H143 provides a ligand contact to Zn(2+). The next 2 helical transmembrane spans lie at 154–174 and 195–215; these read LIQG…AGII and AVVF…VAYF. Residue E220 participates in Zn(2+) binding.

This sequence belongs to the peptidase M48B family. Requires Zn(2+) as cofactor.

It localises to the cell inner membrane. The protein is Protease HtpX of Shewanella baltica (strain OS223).